The following is a 115-amino-acid chain: Large ribosomal subunit protein bL19 (115 aa).

The protein belongs to the bacterial ribosomal protein bL19 family.

Its function is as follows. This protein is located at the 30S-50S ribosomal subunit interface and may play a role in the structure and function of the aminoacyl-tRNA binding site. The chain is Large ribosomal subunit protein bL19 from Edwardsiella ictaluri (strain 93-146).